Here is a 200-residue protein sequence, read N- to C-terminus: Nucleoside triphosphate pyrophosphatase (200 aa).

Asp-79 serves as the catalytic Proton acceptor.

Belongs to the Maf family. A divalent metal cation is required as a cofactor.

The protein resides in the cytoplasm. It carries out the reaction a ribonucleoside 5'-triphosphate + H2O = a ribonucleoside 5'-phosphate + diphosphate + H(+). It catalyses the reaction a 2'-deoxyribonucleoside 5'-triphosphate + H2O = a 2'-deoxyribonucleoside 5'-phosphate + diphosphate + H(+). In terms of biological role, nucleoside triphosphate pyrophosphatase. May have a dual role in cell division arrest and in preventing the incorporation of modified nucleotides into cellular nucleic acids. The sequence is that of Nucleoside triphosphate pyrophosphatase from Legionella pneumophila (strain Corby).